Consider the following 218-residue polypeptide: PKHD-type hydroxylase IL0759 (218 aa).

Positions 76–170 (QVARVTINRY…RLAMIGWVQS (95 aa)) constitute a Fe2OG dioxygenase domain. Fe cation contacts are provided by His94, Asp96, and His151. Arg161 provides a ligand contact to 2-oxoglutarate.

Requires Fe(2+) as cofactor. The cofactor is L-ascorbate.

This chain is PKHD-type hydroxylase IL0759, found in Idiomarina loihiensis (strain ATCC BAA-735 / DSM 15497 / L2-TR).